We begin with the raw amino-acid sequence, 292 residues long: Protease HtpX (292 aa).

2 helical membrane-spanning segments follow: residues 4-24 (IALF…VLSL) and 34-54 (GLMI…LLMS). Residue His-139 participates in Zn(2+) binding. Residue Glu-140 is part of the active site. His-143 contributes to the Zn(2+) binding site. 2 helical membrane-spanning segments follow: residues 158-178 (IVNT…AGFL) and 192-212 (MIYF…ASII). Glu-221 provides a ligand contact to Zn(2+).

The protein belongs to the peptidase M48B family. Zn(2+) is required as a cofactor.

It is found in the cell inner membrane. The chain is Protease HtpX from Serratia proteamaculans (strain 568).